The sequence spans 104 residues: Small ubiquitin-related modifier 3 (104 aa).

Residues Lys5 and Lys7 each participate in a glycyl lysine isopeptide (Lys-Gly) (interchain with G-Cter in SUMO2) cross-link. Lys11 is covalently cross-linked (Glycyl lysine isopeptide (Lys-Gly) (interchain with G-Cter in SUMO); alternate). A Glycyl lysine isopeptide (Lys-Gly) (interchain with G-Cter in SUMO2); alternate cross-link involves residue Lys11. The Ubiquitin-like domain maps to 15 to 92 (DHINLKVAGQ…IDVFQQQTGG (78 aa)). Gly92 is covalently cross-linked (Glycyl lysine isopeptide (Gly-Lys) (interchain with K-? in acceptor proteins)). A propeptide spanning residues 93 to 104 (SRVASCLLGSGL) is cleaved from the precursor.

The protein belongs to the ubiquitin family. SUMO subfamily. In terms of assembly, interacts with SAE2 and UBE2I. Covalently attached to a number of proteins. Interacts with USP25 (via ts SIM domain); the interaction sumoylates USP25 and inhibits its ubiquitin hydrolyzing activity. Interacts with BMAL1. In terms of processing, polymeric chains can be formed through Lys-11 cross-linking. Cleavage of precursor form by SENP1, SENP2 or SENP5 is necessary for function.

Its subcellular location is the cytoplasm. It is found in the nucleus. It localises to the PML body. Functionally, ubiquitin-like protein which can be covalently attached to target lysines either as a monomer or as a lysine-linked polymer. Does not seem to be involved in protein degradation and may function as an antagonist of ubiquitin in the degradation process. Plays a role in a number of cellular processes such as nuclear transport, DNA replication and repair, mitosis and signal transduction. Covalent attachment to its substrates requires prior activation by the E1 complex SAE1-SAE2 and linkage to the E2 enzyme UBE2I, and can be promoted by an E3 ligase such as PIAS1-4, RANBP2 or CBX4. Plays a role in the regulation of sumoylation status of SETX. This Bos taurus (Bovine) protein is Small ubiquitin-related modifier 3 (SUMO3).